We begin with the raw amino-acid sequence, 169 residues long: Protein-export protein SecB (169 aa).

It belongs to the SecB family. In terms of assembly, homotetramer, a dimer of dimers. One homotetramer interacts with 1 SecA dimer.

Its subcellular location is the cytoplasm. One of the proteins required for the normal export of preproteins out of the cell cytoplasm. It is a molecular chaperone that binds to a subset of precursor proteins, maintaining them in a translocation-competent state. It also specifically binds to its receptor SecA. The polypeptide is Protein-export protein SecB (Mannheimia succiniciproducens (strain KCTC 0769BP / MBEL55E)).